Consider the following 78-residue polypeptide: Translation initiation factor IF-1, chloroplastic (78 aa).

The 72-residue stretch at 1-72 folds into the S1-like domain; the sequence is MKKQNLIDME…TKGRITYRLR (72 aa).

The protein belongs to the IF-1 family. Component of the 30S ribosomal translation pre-initiation complex which assembles on the 30S ribosome in the order IF-2 and IF-3, IF-1 and N-formylmethionyl-tRNA(fMet); mRNA recruitment can occur at any time during PIC assembly.

The protein resides in the plastid. Its subcellular location is the chloroplast. One of the essential components for the initiation of protein synthesis. Stabilizes the binding of IF-2 and IF-3 on the 30S subunit to which N-formylmethionyl-tRNA(fMet) subsequently binds. Helps modulate mRNA selection, yielding the 30S pre-initiation complex (PIC). Upon addition of the 50S ribosomal subunit IF-1, IF-2 and IF-3 are released leaving the mature 70S translation initiation complex. This chain is Translation initiation factor IF-1, chloroplastic, found in Physcomitrium patens (Spreading-leaved earth moss).